Reading from the N-terminus, the 331-residue chain is Gamma-parvin (331 aa).

An N-acetylmethionine modification is found at Met-1. The interval 17 to 39 (EPPAEEELSKGGKKKYLPPTSRK) is disordered. Calponin-homology (CH) domains are found at residues 44 to 151 (EELQ…KRFQ) and 210 to 317 (NAVK…CKHT).

Belongs to the parvin family. Interacts with ILK; the interaction promotes the establishment of cell polarity required for leukocyte migration. Interacts with ARHGEF6; the guanine nucleotide exchange factor activity of ARHGEF6 is essential for the PARVG-induced enhancement of cell spreading. In terms of tissue distribution, expressed predominantly in lymphoid organs, including spleen, thymus, lymph node, bone marrow and peripheral blood leukocytes and moderately in the digestive tract, including stomach, duodenum, jejunum, ileum, ileocecum and appendix, as well as in lung and liver. Also expressed in tumors, but at a lower level than in the corresponding normal tissues.

The protein resides in the cell junction. It is found in the focal adhesion. Its subcellular location is the cell membrane. The protein localises to the cytoplasm. It localises to the cytoskeleton. Its function is as follows. Plays a role with ILK in promoting the cell adhesion and spreading of leukocytes. This Homo sapiens (Human) protein is Gamma-parvin (PARVG).